The primary structure comprises 143 residues: Lysozyme C (143 aa).

Residues 1–15 (MKIPVFLLLLALANA) form the signal peptide. One can recognise a C-type lysozyme domain in the interval 16–143 (KVFQRCEWAR…LSAYIAGCGL (128 aa)). Cystine bridges form between cysteine 21/cysteine 141, cysteine 45/cysteine 129, cysteine 79/cysteine 94, and cysteine 90/cysteine 108. Residues glutamate 50 and aspartate 67 contribute to the active site.

The protein belongs to the glycosyl hydrolase 22 family. In terms of assembly, monomer.

The protein resides in the secreted. The enzyme catalyses Hydrolysis of (1-&gt;4)-beta-linkages between N-acetylmuramic acid and N-acetyl-D-glucosamine residues in a peptidoglycan and between N-acetyl-D-glucosamine residues in chitodextrins.. Functionally, lysozymes have primarily a bacteriolytic function; those in tissues and body fluids are associated with the monocyte-macrophage system and enhance the activity of immunoagents. This is Lysozyme C from Takifugu rubripes (Japanese pufferfish).